Reading from the N-terminus, the 859-residue chain is ATP-dependent RNA helicase DDX24 (859 aa).

K17 is subject to N6-acetyllysine. Residue S60 is modified to Phosphoserine. Residues 61–170 are disordered; it reads PAKNPSSLFS…KGLEPSQSTA (110 aa). The residue at position 71 (K71) is an N6-acetyllysine. Phosphoserine is present on residues S82 and S94. Basic residues predominate over residues 94-105; sequence SPKKKIKLKKSK. Residues 106–115 are compositionally biased toward polar residues; that stretch reads NVATEGTSTQ. Residues 125 to 139 are compositionally biased toward acidic residues; sequence LEAQGDDMVCDDPEA. A Q motif motif is present at residues 192–220; sequence SAWKDLFVPRPVLRALSFLGFSAPTPIQA. A Helicase ATP-binding domain is found at 224-528; the sequence is APAIRDKLDI…RILHKKHTKK (305 aa). 237-244 contributes to the ATP binding site; it reads AETGSGKT. Residues 262–300 are disordered; the sequence is NAAPPPSNTEAPPGETRTEAGAETRSPGKAEAESDALPD. Positions 277–293 are enriched in basic and acidic residues; that stretch reads TRTEAGAETRSPGKAEA. Residues S287 and S295 each carry the phosphoserine modification. T302 carries the phosphothreonine modification. Residues 326 to 376 are disordered; that stretch reads SDQALLFGDDDAGEGPSSLIREKPVPKQNENEEENLDKEQTGNLKQELDDK. K370 is covalently cross-linked (Glycyl lysine isopeptide (Lys-Gly) (interchain with G-Cter in SUMO2)). Positions 471–474 match the DEAD box motif; that stretch reads DEAD. Residues 578–723 form the Helicase C-terminal domain; it reads YLYYFLMQYP…LFPVQTKYMD (146 aa). Glycyl lysine isopeptide (Lys-Gly) (interchain with G-Cter in SUMO2) cross-links involve residues K624, K808, and K825. Polar residues-rich tracts occupy residues 799 to 814 and 823 to 833; these read PLFT…TQSG and PSKSESALSCL. Residues 799-859 form a disordered region; the sequence is PLFTESQKTK…EQPQPSTSAN (61 aa).

It belongs to the DEAD box helicase family. DDX24/MAK5 subfamily. In terms of assembly, interacts with FADD. Interacts with RIPK1; this interaction disrupts RLR signaling activation of IFN-dependent transcription factor IRF7. Interacts with NIP7. Interacts with EP300; this interaction prevents TP53 acetylation mediated by EP300. (Microbial infection) Interacts with HIV-1 virus Gag and Rev proteins. Post-translationally, ubiquitinated by MDM2 without targeting DDX24 for proteasomal degradation. Instead, polyubiquitinated DDX24 promotes interaction with NIP7, a component of pre-rRNP processing complex, and associates with pre-rRNA molecules and pre-ribosomal particles. As to expression, ubiquitous. Most abundant in heart and brain, but with lowest levels in thymus and small intestine.

The protein localises to the cytoplasm. Its subcellular location is the nucleus. The catalysed reaction is ATP + H2O = ADP + phosphate + H(+). In terms of biological role, ATP-dependent RNA helicase that plays a role in various aspects of RNA metabolism including pre-mRNA splicing and is thereby involved in different biological processes such as cell cycle regulation or innate immunity. Plays an inhibitory role in TP53 transcriptional activity and subsequently in TP53 controlled cell growth arrest and senescence by inhibiting its EP300 mediated acetylation. Negatively regulates cytosolic RNA-mediated innate immune signaling at least in part by affecting RIPK1/IRF7 interactions. Alternatively, possesses antiviral activity by recognizing gammaherpesvirus transcripts in the context of lytic reactivation. Plays an essential role in cell cycle regulation in vascular smooth muscle cells by interacting with and regulating FANCA (Fanconi anemia complementation group A) mRNA. (Microbial infection) Plays a positive role in HIV-1 infection by promoting Rev-dependent nuclear export of viral RNAs and their packaging into virus particles. This chain is ATP-dependent RNA helicase DDX24 (DDX24), found in Homo sapiens (Human).